The sequence spans 101 residues: Olivetolic acid cyclase (101 aa).

The Stress-response A/B barrel domain occupies 3 to 97 (VKHLIVLKFK…FWEKLLIFDY (95 aa)). His5 provides a ligand contact to 3,5,7-trioxododecanoyl-CoA. Mg(2+) is bound by residues Val31, Ile34, and Met37. Residue Tyr72 coordinates 3,5,7-trioxododecanoyl-CoA. Catalysis depends on acid/base catalyst residues Tyr72 and His75.

In terms of assembly, homodimer. In terms of tissue distribution, expressed in glandular trichomes and at lower levels in female flowers.

The protein resides in the cytoplasm. It carries out the reaction 3,5,7-trioxododecanoyl-CoA = olivetolate + CoA + H(+). It participates in secondary metabolite biosynthesis; terpenoid biosynthesis. Involved in the biosynthesis of cannabinoids-related terpenophenolic natural products, which have pharmacological activity. Polyketide cyclase which functions in concert with OLS/TKS to form olivetolic acid. Has no intrinsic polyketide synthase activity and requires the presence of OLS to produce olivetolic acid. This is Olivetolic acid cyclase from Cannabis sativa (Hemp).